The primary structure comprises 404 residues: Transcription factor sem-2 (404 aa).

A DNA-binding region (HMG box) is located at residues isoleucine 93 to lysine 161. 2 disordered regions span residues proline 158–asparagine 218 and histidine 321–glycine 359. Over residues glutamine 177 to alanine 199 the composition is skewed to low complexity. Polar residues-rich tracts occupy residues threonine 207–asparagine 218 and alanine 347–glycine 359.

Its subcellular location is the nucleus. Its function is as follows. Probable transcription factor required for embryogenesis, vulval development and cell fate specification of the postembryonic mesoderm (also known as the M lineage). Specifically, required for the specification of sex myoblast cells and their development into the muscles that are necessary for egg-laying. In addition, may be involved in RME GABAergic motor neuron progenitor cell fate specification. The chain is Transcription factor sem-2 from Caenorhabditis elegans.